Consider the following 245-residue polypeptide: Protein crossbronx (245 aa).

One can recognise a UBC core domain in the interval 20 to 177 (QQEYKILAEY…VQESIVESKS (158 aa)).

It belongs to the ubiquitin-conjugating enzyme family. FTS subfamily.

This is Protein crossbronx (cbx) from Drosophila virilis (Fruit fly).